A 193-amino-acid chain; its full sequence is MTEEKNTNTEKTAKKKTNTYLEWGKAIVIAVLLALLIRHFLFEPYLVEGSSMYPTLHDGERLFVNKTVNYIGELKRGDIVIINGETSKIHYVKRLIGKPGETVQMKDDTLYINGKKVAEPYLSKNKKEAEKLGVSLTGDFGPVKVPKGKYFVMGDNRLNSMDSRNGLGLIAEDRIVGTSKFVFFPFNEMRQTK.

Residues 1-25 lie on the Cytoplasmic side of the membrane; the sequence is MTEEKNTNTEKTAKKKTNTYLEWGK. Residues 26–42 traverse the membrane as a helical segment; sequence AIVIAVLLALLIRHFLF. At 43-193 the chain is on the extracellular side; sequence EPYLVEGSSM…FPFNEMRQTK (151 aa). Active-site residues include Ser51 and Lys93.

It belongs to the peptidase S26 family.

Its subcellular location is the cell membrane. The enzyme catalyses Cleavage of hydrophobic, N-terminal signal or leader sequences from secreted and periplasmic proteins.. This is Signal peptidase I T (sipT) from Bacillus subtilis (strain 168).